A 363-amino-acid polypeptide reads, in one-letter code: Probable mannitol dehydrogenase 3 (363 aa).

Residues C51, H73, C104, C107, C110, C118, and C168 each coordinate Zn(2+).

This sequence belongs to the zinc-containing alcohol dehydrogenase family. Requires Zn(2+) as cofactor.

The catalysed reaction is D-mannitol + NAD(+) = D-mannose + NADH + H(+). Oxidizes mannitol to mannose. Provides the initial step by which translocated mannitol is committed to central metabolism and, by regulating mannitol pool size, is important in regulating salt tolerance at the cellular level. The sequence is that of Probable mannitol dehydrogenase 3 (CAD3) from Stylosanthes humilis (Townsville stylo).